The following is a 127-amino-acid chain: Glycine cleavage system H protein (127 aa).

The 83-residue stretch at 22-104 (EAVIGITHFA…YTEGWMLRVK (83 aa)) folds into the Lipoyl-binding domain. K63 carries the N6-lipoyllysine modification.

Belongs to the GcvH family. In terms of assembly, the glycine cleavage system is composed of four proteins: P, T, L and H. (R)-lipoate is required as a cofactor.

Its function is as follows. The glycine cleavage system catalyzes the degradation of glycine. The H protein shuttles the methylamine group of glycine from the P protein to the T protein. The sequence is that of Glycine cleavage system H protein from Nitratidesulfovibrio vulgaris (strain DP4) (Desulfovibrio vulgaris).